We begin with the raw amino-acid sequence, 325 residues long: Short chain isoprenyl diphosphate synthase (325 aa).

Isopentenyl diphosphate-binding residues include K44, R47, and H76. 2 residues coordinate Mg(2+): D83 and D87. R92 lines the an all-trans-polyprenyl diphosphate pocket. R93 provides a ligand contact to isopentenyl diphosphate. An all-trans-polyprenyl diphosphate-binding residues include K173, T174, Q211, K228, and K238.

Belongs to the FPP/GGPP synthase family. Homodimer. Mg(2+) serves as cofactor.

The protein resides in the cytoplasm. The protein is Short chain isoprenyl diphosphate synthase (idsA) of Methanothermobacter thermautotrophicus (strain ATCC 29096 / DSM 1053 / JCM 10044 / NBRC 100330 / Delta H) (Methanobacterium thermoautotrophicum).